The sequence spans 695 residues: Nucleoprotein (695 aa).

Coiled coils occupy residues 316–341 (VNVG…RRHE) and 372–399 (QTLA…VEDQ). Disordered stretches follow at residues 423–458 (VQAR…SFVD), 483–515 (TSRE…TNPI), and 527–612 (PVQE…DTRA). Polar residues-rich tracts occupy residues 495–505 (RQSQDLNNSQG) and 537–552 (TTDS…SDNE). Residues 603-606 (PSAP) carry the PTAP/PSAP motif motif.

Belongs to the filoviruses nucleoprotein family. As to quaternary structure, homooligomer. Homomultimerizes to form the nucleocapsid. Binds to viral genomic RNA. Interacts with VP35 and VP30 to form the nucleocapsid. Also interacts with VP24 and VP40. Phosphorylated.

Its subcellular location is the virion. The protein localises to the host cytoplasm. Functionally, encapsidates the genome, protecting it from nucleases. The encapsidated genomic RNA is termed the nucleocapsid and serves as template for transcription and replication. During replication, encapsidation by NP is coupled to RNA synthesis and all replicative products are resistant to nucleases. In Chlorocebus aethiops (Green monkey), this protein is Nucleoprotein (NP).